The following is an 89-amino-acid chain: Small ribosomal subunit protein uS14 (89 aa).

It belongs to the universal ribosomal protein uS14 family. In terms of assembly, part of the 30S ribosomal subunit. Contacts proteins S3 and S10.

In terms of biological role, binds 16S rRNA, required for the assembly of 30S particles and may also be responsible for determining the conformation of the 16S rRNA at the A site. This Cytophaga hutchinsonii (strain ATCC 33406 / DSM 1761 / CIP 103989 / NBRC 15051 / NCIMB 9469 / D465) protein is Small ribosomal subunit protein uS14.